The following is a 76-amino-acid chain: MPQSSRYSDEHVEQLLSEMVNVLEKHHAPTDLALMVLGNMVTNLINTSIAPAQRQVMARSFAEALQASIKKADKAH.

The protein belongs to the UPF0352 family.

The polypeptide is UPF0352 protein PC1_1633 (Pectobacterium carotovorum subsp. carotovorum (strain PC1)).